The sequence spans 224 residues: Urease accessory protein UreF (224 aa).

The protein belongs to the UreF family. As to quaternary structure, ureD, UreF and UreG form a complex that acts as a GTP-hydrolysis-dependent molecular chaperone, activating the urease apoprotein by helping to assemble the nickel containing metallocenter of UreC. The UreE protein probably delivers the nickel.

It localises to the cytoplasm. Functionally, required for maturation of urease via the functional incorporation of the urease nickel metallocenter. The sequence is that of Urease accessory protein UreF from Klebsiella pneumoniae subsp. pneumoniae (strain ATCC 700721 / MGH 78578).